The following is a 246-amino-acid chain: 5'-nucleotidase SurE (246 aa).

Positions 8, 9, 39, and 91 each coordinate a divalent metal cation.

This sequence belongs to the SurE nucleotidase family. Requires a divalent metal cation as cofactor.

It is found in the cytoplasm. It carries out the reaction a ribonucleoside 5'-phosphate + H2O = a ribonucleoside + phosphate. Its function is as follows. Nucleotidase that shows phosphatase activity on nucleoside 5'-monophosphates. The chain is 5'-nucleotidase SurE from Histophilus somni (strain 129Pt) (Haemophilus somnus).